We begin with the raw amino-acid sequence, 570 residues long: Alpha-glucosidase (570 aa).

The active-site Nucleophile is the D206. The Proton donor role is filled by E263.

The protein belongs to the glycosyl hydrolase 13 family.

It carries out the reaction Hydrolysis of terminal, non-reducing (1-&gt;4)-linked alpha-D-glucose residues with release of alpha-D-glucose.. This Candida albicans (Yeast) protein is Alpha-glucosidase (MAL2).